The primary structure comprises 721 residues: Zinc-transporting ATPase (721 aa).

At 1-107 (MTQSSPLKTQ…HSHGAGEFNL (107 aa)) the chain is on the cytoplasmic side. The HMA domain occupies 8 to 74 (KTQQMQVGGM…RIAALGYTLA (67 aa)). Residues C19 and C22 each coordinate Zn(2+). The disordered stretch occupies residues 80 to 101 (VTLNGHKHPHSHREEGHSHSHG). A helical membrane pass occupies residues 108–128 (KQELLPVLTAIALFTIAILFE). At 129-140 (QPLHNTPGQIAE) the chain is on the extracellular side. A helical transmembrane segment spans residues 141–160 (FAVIIPAYLLSGWTVLKTAG). The Cytoplasmic portion of the chain corresponds to 161 to 167 (RNILRGQ). Residues 168–187 (IFDENFLMTIATLGALAIHQ) form a helical membrane-spanning segment. Over 188-190 (LPE) the chain is Extracellular. Residues 191–210 (AVAVMLFFRVGELFQEYSVG) traverse the membrane as a helical segment. Residues 211–344 (RSRRSIKALL…ITQFARYYTP (134 aa)) lie on the Cytoplasmic side of the membrane. Residues 345–363 (VIVFLSLAVALLPPLFIPG) form a helical membrane-spanning segment. The Extracellular segment spans residues 364–369 (ADRADW). The chain crosses the membrane as a helical span at residues 370-387 (VYRALVLLVISCPCGLVI). Residues 388–671 (SIPLGYFGGI…AIHVARKTRQ (284 aa)) are Cytoplasmic-facing. D425 (4-aspartylphosphate intermediate) is an active-site residue. D618 and D622 together coordinate Mg(2+). The helical transmembrane segment at 672–693 (IVVQNIVLALGIKALFIALGTI) threads the bilayer. Over 694–701 (GLATLWEA) the chain is Extracellular. A helical membrane pass occupies residues 702–717 (VFADVGVALLAILNAT). The Cytoplasmic segment spans residues 718–721 (RIAK).

The protein belongs to the cation transport ATPase (P-type) (TC 3.A.3) family. Type IB subfamily.

The protein localises to the cell membrane. The catalysed reaction is Zn(2+)(in) + ATP + H2O = Zn(2+)(out) + ADP + phosphate + H(+). The sequence is that of Zinc-transporting ATPase (ziaA) from Synechocystis sp. (strain ATCC 27184 / PCC 6803 / Kazusa).